Reading from the N-terminus, the 523-residue chain is DNA-directed RNA polymerase subunit Rpo2N (523 aa).

Residues serine 501 to aspartate 523 are disordered. Over residues methionine 513–aspartate 523 the composition is skewed to polar residues.

Belongs to the RNA polymerase beta chain family. As to quaternary structure, part of the RNA polymerase complex.

It localises to the cytoplasm. It catalyses the reaction RNA(n) + a ribonucleoside 5'-triphosphate = RNA(n+1) + diphosphate. Its function is as follows. DNA-dependent RNA polymerase (RNAP) catalyzes the transcription of DNA into RNA using the four ribonucleoside triphosphates as substrates. The Rpo2 subunit (Rpo2N and Rpo2C in this organism) is implicated in DNA promoter recognition and in nucleotide binding. The protein is DNA-directed RNA polymerase subunit Rpo2N of Halobacterium salinarum (strain ATCC 29341 / DSM 671 / R1).